We begin with the raw amino-acid sequence, 139 residues long: Small ribosomal subunit protein uS11 (139 aa).

The protein belongs to the universal ribosomal protein uS11 family. As to quaternary structure, part of the 30S ribosomal subunit.

In terms of biological role, located on the platform of the 30S subunit. The chain is Small ribosomal subunit protein uS11 from Pyrobaculum islandicum (strain DSM 4184 / JCM 9189 / GEO3).